A 152-amino-acid polypeptide reads, in one-letter code: Large ribosomal subunit protein uL15 (152 aa).

The tract at residues 1 to 66 (MRSNPMTLRL…GFEGGQTPMQ (66 aa)) is disordered. The segment covering 28–38 (RGIGSGLGKTA) has biased composition (gly residues). Over residues 39–52 (GRGHKGSFARKGGG) the composition is skewed to basic residues.

It belongs to the universal ribosomal protein uL15 family. As to quaternary structure, part of the 50S ribosomal subunit.

Functionally, binds to the 23S rRNA. The polypeptide is Large ribosomal subunit protein uL15 (Xanthomonas oryzae pv. oryzae (strain KACC10331 / KXO85)).